Consider the following 257-residue polypeptide: Flavodoxin/ferredoxin--NADP reductase (257 aa).

The 109-residue stretch at 2-110 (NPWINANVLK…EKSFGFFTLD (109 aa)) folds into the FAD-binding FR-type domain. FAD-binding positions include 59-62 (RAYS), Tyr-75, 83-85 (KLS), and Thr-125. NADP(+) is bound by residues 152–153 (VR), 182–183 (SR), Arg-193, 223–225 (NPA), and Asp-229. Residue 256–257 (YW) coordinates FAD.

It belongs to the ferredoxin--NADP reductase type 1 family. The cofactor is FAD.

It localises to the cytoplasm. The enzyme catalyses 2 reduced [2Fe-2S]-[ferredoxin] + NADP(+) + H(+) = 2 oxidized [2Fe-2S]-[ferredoxin] + NADPH. The catalysed reaction is reduced [flavodoxin] + NADP(+) = oxidized [flavodoxin] + NADPH + 2 H(+). Its function is as follows. Transports electrons between flavodoxin or ferredoxin and NADPH. This Buchnera aphidicola subsp. Schizaphis graminum (strain Sg) protein is Flavodoxin/ferredoxin--NADP reductase (fpr).